We begin with the raw amino-acid sequence, 208 residues long: MRKQAGGPCEKLNFPLVELEPYARVNRETTKLNKAHVRRDYSGRSICQPDTNNPTRWKYERPLETIRAWQDVAEGKVPASNEKAARVSNLKTVPSLKRENKEVNANSKPPVKQQEVIESTVISKSQSPSVKQLKLTESTLLAPSSSLKPSVSLKKDISSNLLCAAASNGYFRRPAAMRAQTLVPITQPDSKKNELKQKFKHLVHHVLT.

The tract at residues 77-114 (VPASNEKAARVSNLKTVPSLKRENKEVNANSKPPVKQQ) is disordered.

Its function is as follows. Has a role in meiosis. This chain is Meiotically up-regulated gene 9 protein (mug9), found in Schizosaccharomyces pombe (strain 972 / ATCC 24843) (Fission yeast).